A 136-amino-acid chain; its full sequence is Large ribosomal subunit protein uL22 (136 aa).

This sequence belongs to the universal ribosomal protein uL22 family. In terms of assembly, part of the 50S ribosomal subunit.

This protein binds specifically to 23S rRNA; its binding is stimulated by other ribosomal proteins, e.g. L4, L17, and L20. It is important during the early stages of 50S assembly. It makes multiple contacts with different domains of the 23S rRNA in the assembled 50S subunit and ribosome. Its function is as follows. The globular domain of the protein is located near the polypeptide exit tunnel on the outside of the subunit, while an extended beta-hairpin is found that lines the wall of the exit tunnel in the center of the 70S ribosome. The sequence is that of Large ribosomal subunit protein uL22 from Parabacteroides distasonis (strain ATCC 8503 / DSM 20701 / CIP 104284 / JCM 5825 / NCTC 11152).